A 419-amino-acid chain; its full sequence is MRKIIINGGKQLTGEVAVSGAKNSVVALIPATILADDVVVLDGVPAISDVDSLVDIMETMGAKIKRYGETLEIDPCGVKDIPMPYGKINSLRASYYFYGSLLGRYGQATLGLPGGCDLGPRPIDLHLKAFEAMGASVSYEGDSMRLATNGKPLQGANIYMDTVSVGATINTIIAAAKANGRTVIENAAREPEIIDVATLLNNMGAHIRGAGTDVITIEGVKSLHGTRHQVIPDRIEAGTYIAMAAAIGRGIKVTNVLYEHLESFIAKLDEMGVRMTVEEDSIFVEEQERLKAVSIKTSPYPGFATDLQQPLTPLLLTAEGNGSLLDTIYEKRVNHVPELARMGANISTLGGKIVYSGPNQLSGAPVKATDLRAGAALVIAGLMAEGRTEITNIEFILRGYSNIIEKLTSLGADIQLVEE.

22–23 (KN) is a binding site for phosphoenolpyruvate. Arg-92 provides a ligand contact to UDP-N-acetyl-alpha-D-glucosamine. Residue Cys-116 is the Proton donor of the active site. Cys-116 carries the post-translational modification 2-(S-cysteinyl)pyruvic acid O-phosphothioketal. UDP-N-acetyl-alpha-D-glucosamine contacts are provided by residues 121–125 (RPIDL), Asp-306, and Ile-328.

The protein belongs to the EPSP synthase family. MurA subfamily.

It localises to the cytoplasm. It catalyses the reaction phosphoenolpyruvate + UDP-N-acetyl-alpha-D-glucosamine = UDP-N-acetyl-3-O-(1-carboxyvinyl)-alpha-D-glucosamine + phosphate. Its pathway is cell wall biogenesis; peptidoglycan biosynthesis. Functionally, cell wall formation. Adds enolpyruvyl to UDP-N-acetylglucosamine. In Streptococcus agalactiae serotype Ia (strain ATCC 27591 / A909 / CDC SS700), this protein is UDP-N-acetylglucosamine 1-carboxyvinyltransferase 1.